Reading from the N-terminus, the 564-residue chain is Dihydroxy-acid dehydratase (564 aa).

The span at 1-10 shows a compositional bias: basic residues; the sequence is MTDTRTKRRM. The tract at residues 1–23 is disordered; the sequence is MTDTRTKRRMNWNSHHITQGDER. Position 57 (C57) interacts with [2Fe-2S] cluster. D89 provides a ligand contact to Mg(2+). C130 serves as a coordination point for [2Fe-2S] cluster. D131 and K132 together coordinate Mg(2+). K132 is modified (N6-carboxylysine). Residue C202 participates in [2Fe-2S] cluster binding. A Mg(2+)-binding site is contributed by E454. S480 acts as the Proton acceptor in catalysis.

It belongs to the IlvD/Edd family. In terms of assembly, homodimer. [2Fe-2S] cluster serves as cofactor. It depends on Mg(2+) as a cofactor.

The enzyme catalyses (2R)-2,3-dihydroxy-3-methylbutanoate = 3-methyl-2-oxobutanoate + H2O. It catalyses the reaction (2R,3R)-2,3-dihydroxy-3-methylpentanoate = (S)-3-methyl-2-oxopentanoate + H2O. The protein operates within amino-acid biosynthesis; L-isoleucine biosynthesis; L-isoleucine from 2-oxobutanoate: step 3/4. Its pathway is amino-acid biosynthesis; L-valine biosynthesis; L-valine from pyruvate: step 3/4. Functions in the biosynthesis of branched-chain amino acids. Catalyzes the dehydration of (2R,3R)-2,3-dihydroxy-3-methylpentanoate (2,3-dihydroxy-3-methylvalerate) into 2-oxo-3-methylpentanoate (2-oxo-3-methylvalerate) and of (2R)-2,3-dihydroxy-3-methylbutanoate (2,3-dihydroxyisovalerate) into 2-oxo-3-methylbutanoate (2-oxoisovalerate), the penultimate precursor to L-isoleucine and L-valine, respectively. The chain is Dihydroxy-acid dehydratase from Deinococcus geothermalis (strain DSM 11300 / CIP 105573 / AG-3a).